The sequence spans 349 residues: Putative inosamine-phosphate amidinotransferase 2 (349 aa).

It belongs to the amidinotransferase family.

The enzyme catalyses 1-amino-1-deoxy-scyllo-inositol 4-phosphate + L-arginine = 1-guanidino-1-deoxy-scyllo-inositol 4-phosphate + L-ornithine. It participates in antibiotic biosynthesis; streptomycin biosynthesis. Its function is as follows. It is not obvious if strB2 participates in streptomycin biosynthesis as an inosamine-phosphate amidinotransferase. Attempt to measure its activity have failed and the nucleophilic cysteine which is the key residue for amidine transfer is not conserved but replaced by a glycine residue. In Streptomyces griseus, this protein is Putative inosamine-phosphate amidinotransferase 2 (strB2).